An 88-amino-acid chain; its full sequence is Large ribosomal subunit protein bL27 (88 aa).

Residues 1–21 (MAHKKGASSSRNGRDSAAQRL) are disordered.

Belongs to the bacterial ribosomal protein bL27 family.

The chain is Large ribosomal subunit protein bL27 from Mycobacterium avium (strain 104).